The following is a 56-amino-acid chain: Conotoxin reg3.9 (56 aa).

Residues 1–8 form the signal peptide; it reads LLFPLSAL. The segment at 1-22 is disordered; sequence LLFPLSALPLDGDQPADQPAER. Positions 9–40 are excised as a propeptide; sequence PLDGDQPADQPAERMQDISPEQNFWFDLVERG. 3 disulfide bridges follow: Cys41-Cys55, Cys42-Cys53, and Cys47-Cys56.

It belongs to the conotoxin M superfamily. As to expression, expressed by the venom duct.

The protein resides in the secreted. The sequence is that of Conotoxin reg3.9 from Conus regius (Crown cone).